A 179-amino-acid polypeptide reads, in one-letter code: uncharacterized protein (179 aa).

It is found in the virion. This is an uncharacterized protein from Acanthamoeba polyphaga (Amoeba).